Here is a 135-residue protein sequence, read N- to C-terminus: Large ribosomal subunit protein mL54 (135 aa).

A mitochondrion-targeting transit peptide spans 1–14; the sequence is MAAAHLLRASRVWA.

It belongs to the mitochondrion-specific ribosomal protein mL54 family. As to quaternary structure, component of the mitochondrial ribosome large subunit (39S) which comprises a 16S rRNA and about 50 distinct proteins.

It localises to the mitochondrion. This Mus musculus (Mouse) protein is Large ribosomal subunit protein mL54 (Mrpl54).